The chain runs to 215 residues: Mediator of RNA polymerase II transcription subunit 18 (215 aa).

The protein belongs to the Mediator complex subunit 18 family. As to quaternary structure, component of the Mediator complex.

The protein resides in the nucleus. Component of the Mediator complex, a coactivator involved in the regulated transcription of nearly all RNA polymerase II-dependent genes. Mediator functions as a bridge to convey information from gene-specific regulatory proteins to the basal RNA polymerase II transcription machinery. Mediator is recruited to promoters by direct interactions with regulatory proteins and serves as a scaffold for the assembly of a functional preinitiation complex with RNA polymerase II and the general transcription factors. The polypeptide is Mediator of RNA polymerase II transcription subunit 18 (MED18) (Aedes aegypti (Yellowfever mosquito)).